The primary structure comprises 241 residues: Zinc finger CCHC domain-containing protein 24 (241 aa).

2 positions are modified to phosphoserine: serine 65 and serine 93. A CCHC-type zinc finger spans residues 132 to 149; it reads YLCHLCFNKGHYIKDCPQ.

This Homo sapiens (Human) protein is Zinc finger CCHC domain-containing protein 24 (ZCCHC24).